A 203-amino-acid polypeptide reads, in one-letter code: Outer-membrane lipoprotein LolB (203 aa).

The N-terminal stretch at 1 to 21 (MTGRWSPRLLAGLLAALVLSG) is a signal peptide. Cys-22 carries the N-palmitoyl cysteine lipid modification. Residue Cys-22 is the site of S-diacylglycerol cysteine attachment.

Belongs to the LolB family. In terms of assembly, monomer.

It is found in the cell outer membrane. Plays a critical role in the incorporation of lipoproteins in the outer membrane after they are released by the LolA protein. This chain is Outer-membrane lipoprotein LolB, found in Halorhodospira halophila (strain DSM 244 / SL1) (Ectothiorhodospira halophila (strain DSM 244 / SL1)).